Consider the following 87-residue polypeptide: MVKIRLVRLGAKKRPFYKIVIADSRYPRNGKFIEKIGFFKPLLSIKHPPQICINTLRITHWIKNGAIMSKRVKKLVKIHSYINKKIK.

It belongs to the bacterial ribosomal protein bS16 family.

The chain is Small ribosomal subunit protein bS16 from Buchnera aphidicola subsp. Baizongia pistaciae (strain Bp).